Reading from the N-terminus, the 393-residue chain is GDSL esterase/lipase At1g28600 (393 aa).

Positions M1–S22 are cleaved as a signal peptide. S38 (nucleophile) is an active-site residue. N-linked (GlcNAc...) asparagine glycosylation is found at N133 and N317. Active-site residues include D340 and H343. A glycan (N-linked (GlcNAc...) asparagine) is linked at N382.

The protein belongs to the 'GDSL' lipolytic enzyme family.

Its subcellular location is the secreted. The protein is GDSL esterase/lipase At1g28600 of Arabidopsis thaliana (Mouse-ear cress).